A 530-amino-acid polypeptide reads, in one-letter code: BTB/POZ domain-containing protein 3 (530 aa).

The disordered stretch occupies residues 23–48; the sequence is KNRSKKGSKKANSSGGGGGGGSVGSG. Residues 36–46 are compositionally biased toward gly residues; it reads SGGGGGGGSVG. The region spanning 128-198 is the BTB domain; that stretch reads ADVHFVVGPP…IYCDEIDLAA (71 aa). A BACK domain is found at 243 to 308; that stretch reads FEEPDLTQRC…NWAEVECQRQ (66 aa).

As to expression, in the somatosensory cortex, specifically expressed in spiny stellate neurons during barrel formation. Also expressed in the olfactory bulb, piriform cortex and hippocampus.

The protein localises to the cytoplasm. It is found in the cytosol. The protein resides in the nucleus. Its function is as follows. Acts as a key regulator of dendritic field orientation during development of sensory cortex. Also directs dendrites toward active axon terminals when ectopically expressed. The chain is BTB/POZ domain-containing protein 3 (Btbd3) from Mus musculus (Mouse).